A 73-amino-acid polypeptide reads, in one-letter code: Toxin Td4 (73 aa).

The signal sequence occupies residues Ile1–Cys7. In terms of domain architecture, LCN-type CS-alpha/beta spans Lys8 to Gly70. 4 cysteine pairs are disulfide-bonded: Cys18–Cys69, Cys22–Cys44, Cys30–Cys50, and Cys34–Cys52. The residue at position 71 (Arg71) is an Arginine amide.

Belongs to the long (4 C-C) scorpion toxin superfamily. Sodium channel inhibitor family. Beta subfamily. As to expression, expressed by the venom gland.

The protein localises to the secreted. Its function is as follows. Beta toxins bind voltage-independently at site-4 of sodium channels (Nav) and shift the voltage of activation toward more negative potentials thereby affecting sodium channel activation and promoting spontaneous and repetitive firing. This chain is Toxin Td4, found in Tityus discrepans (Venezuelan scorpion).